Consider the following 438-residue polypeptide: 23S rRNA (uracil(1939)-C(5))-methyltransferase RlmD (438 aa).

One can recognise a TRAM domain in the interval 10-68 (RVTTRQTITVKVHDLDSFGQGVAHHNGKALFVQGALPDEVAEVSIIEDKRHFSRGVATR). Residues Cys-81, Cys-87, Cys-90, and Cys-168 each coordinate [4Fe-4S] cluster. S-adenosyl-L-methionine is bound by residues Gln-271, Phe-300, Asn-305, Glu-321, Asn-348, and Asp-369. The Nucleophile role is filled by Cys-395.

Belongs to the class I-like SAM-binding methyltransferase superfamily. RNA M5U methyltransferase family. RlmD subfamily.

The catalysed reaction is uridine(1939) in 23S rRNA + S-adenosyl-L-methionine = 5-methyluridine(1939) in 23S rRNA + S-adenosyl-L-homocysteine + H(+). Catalyzes the formation of 5-methyl-uridine at position 1939 (m5U1939) in 23S rRNA. The sequence is that of 23S rRNA (uracil(1939)-C(5))-methyltransferase RlmD from Erwinia tasmaniensis (strain DSM 17950 / CFBP 7177 / CIP 109463 / NCPPB 4357 / Et1/99).